The sequence spans 152 residues: Ribonuclease H (152 aa).

The RNase H type-1 domain occupies 1-142; that stretch reads MDSKVVIYTD…ADKLAVQGRE (142 aa). Positions 10, 48, 70, and 134 each coordinate Mg(2+).

This sequence belongs to the RNase H family. As to quaternary structure, monomer. Mg(2+) serves as cofactor.

It is found in the cytoplasm. The catalysed reaction is Endonucleolytic cleavage to 5'-phosphomonoester.. Its function is as follows. Endonuclease that specifically degrades the RNA of RNA-DNA hybrids. The protein is Ribonuclease H of Rickettsia typhi (strain ATCC VR-144 / Wilmington).